The sequence spans 120 residues: Glycine cleavage system H protein (120 aa).

A Lipoyl-binding domain is found at 17–99 (VATVGITAHA…QGGGWLYRLK (83 aa)). Position 58 is an N6-lipoyllysine (Lys58).

The protein belongs to the GcvH family. As to quaternary structure, the glycine cleavage system is composed of four proteins: P, T, L and H. Requires (R)-lipoate as cofactor.

In terms of biological role, the glycine cleavage system catalyzes the degradation of glycine. The H protein shuttles the methylamine group of glycine from the P protein to the T protein. The sequence is that of Glycine cleavage system H protein from Methylorubrum extorquens (strain CM4 / NCIMB 13688) (Methylobacterium extorquens).